Consider the following 250-residue polypeptide: 3-deoxy-manno-octulosonate cytidylyltransferase (250 aa).

The protein belongs to the KdsB family.

It is found in the cytoplasm. The enzyme catalyses 3-deoxy-alpha-D-manno-oct-2-ulosonate + CTP = CMP-3-deoxy-beta-D-manno-octulosonate + diphosphate. Its pathway is nucleotide-sugar biosynthesis; CMP-3-deoxy-D-manno-octulosonate biosynthesis; CMP-3-deoxy-D-manno-octulosonate from 3-deoxy-D-manno-octulosonate and CTP: step 1/1. The protein operates within bacterial outer membrane biogenesis; lipopolysaccharide biosynthesis. Functionally, activates KDO (a required 8-carbon sugar) for incorporation into bacterial lipopolysaccharide in Gram-negative bacteria. The sequence is that of 3-deoxy-manno-octulosonate cytidylyltransferase from Syntrophobacter fumaroxidans (strain DSM 10017 / MPOB).